A 223-amino-acid chain; its full sequence is Deoxyribose-phosphate aldolase (223 aa).

D91 (proton donor/acceptor) is an active-site residue. The active-site Schiff-base intermediate with acetaldehyde is the K153. The active-site Proton donor/acceptor is the K183.

Belongs to the DeoC/FbaB aldolase family. DeoC type 1 subfamily.

It localises to the cytoplasm. The catalysed reaction is 2-deoxy-D-ribose 5-phosphate = D-glyceraldehyde 3-phosphate + acetaldehyde. Its pathway is carbohydrate degradation; 2-deoxy-D-ribose 1-phosphate degradation; D-glyceraldehyde 3-phosphate and acetaldehyde from 2-deoxy-alpha-D-ribose 1-phosphate: step 2/2. Its function is as follows. Catalyzes a reversible aldol reaction between acetaldehyde and D-glyceraldehyde 3-phosphate to generate 2-deoxy-D-ribose 5-phosphate. In Mycoplasmopsis synoviae (strain 53) (Mycoplasma synoviae), this protein is Deoxyribose-phosphate aldolase.